The chain runs to 385 residues: Acetate kinase (385 aa).

Asparagine 9 serves as a coordination point for Mg(2+). Lysine 16 contributes to the ATP binding site. Residue arginine 87 coordinates substrate. The active-site Proton donor/acceptor is the aspartate 144. ATP contacts are provided by residues 202–206 and 277–279; these read HLGSG and DIR. Residue glutamate 373 participates in Mg(2+) binding.

This sequence belongs to the acetokinase family. Homodimer. It depends on Mg(2+) as a cofactor. The cofactor is Mn(2+).

Its subcellular location is the cytoplasm. The catalysed reaction is acetate + ATP = acetyl phosphate + ADP. The protein operates within metabolic intermediate biosynthesis; acetyl-CoA biosynthesis; acetyl-CoA from acetate: step 1/2. Functionally, catalyzes the formation of acetyl phosphate from acetate and ATP. Can also catalyze the reverse reaction. The sequence is that of Acetate kinase from Rickettsia akari (strain Hartford).